Reading from the N-terminus, the 193-residue chain is Alpha-S2-casein (193 aa).

A signal peptide spans 1 to 15 (MKFFIFTCLLAVVLA). Ser-23, Ser-24, Ser-25, Ser-28, Ser-47, Ser-68, Ser-123, Ser-125, Ser-128, and Ser-136 each carry phosphoserine.

This sequence belongs to the alpha-casein family. In terms of tissue distribution, mammary gland specific. Secreted in milk.

The protein localises to the secreted. Important role in the capacity of milk to transport calcium phosphate. This is Alpha-S2-casein (CSN1S2) from Camelus dromedarius (Dromedary).